We begin with the raw amino-acid sequence, 108 residues long: Ig kappa chain V region GOM (108 aa).

A framework-1 region spans residues 1–23; that stretch reads DIVMTQTPLSLSVSPGEPASISC. Cys-23 and Cys-88 are disulfide-bonded. Residues 24-34 are complementarity-determining-1; sequence RSSQSNLDYLN. A framework-2 region spans residues 35–49; it reads WYLQKAGQSPRLLPE. The interval 44 to 66 is disordered; it reads PRLLPEQDSQRASGVPDRFSGSG. The interval 50-56 is complementarity-determining-2; that stretch reads QDSQRAS. The segment at 57 to 88 is framework-3; it reads GVPDRFSGSGSGTDFTLRIGRVEAEDAGIYYC. The interval 89 to 97 is complementarity-determining-3; it reads MQRSFYPYT. Residues 98 to 107 are framework-4; it reads FGQGTRLEVR.

This Canis lupus familiaris (Dog) protein is Ig kappa chain V region GOM.